We begin with the raw amino-acid sequence, 311 residues long: 4-hydroxyproline 2-epimerase (311 aa).

Cys-88 functions as the Proton acceptor in the catalytic mechanism. Substrate is bound by residues 89 to 90 (GH), His-208, and Asp-232. Residue Cys-236 is the Proton donor of the active site. 237 to 238 (GT) provides a ligand contact to substrate.

Belongs to the proline racemase family.

The catalysed reaction is trans-4-hydroxy-L-proline = cis-4-hydroxy-D-proline. Functionally, catalyzes the epimerization of trans-4-hydroxy-L-proline (t4LHyp) to cis-4-hydroxy-D-proline (c4DHyp). Is likely involved in a degradation pathway that converts t4LHyp to alpha-ketoglutarate. Displays no proline racemase activity. This is 4-hydroxyproline 2-epimerase from Chromohalobacter salexigens (strain ATCC BAA-138 / DSM 3043 / CIP 106854 / NCIMB 13768 / 1H11).